The primary structure comprises 377 residues: dTDP-fucopyranose mutase (377 aa).

FAD is bound by residues Ser-12, 31–32 (DD), Asn-39, 58–59 (HI), Arg-348, and 355–360 (LDMDVC).

Belongs to the UDP-galactopyranose/dTDP-fucopyranose mutase family. FAD serves as cofactor.

The enzyme catalyses dTDP-alpha-D-fucose = dTDP-alpha-D-fucofuranose. It participates in bacterial outer membrane biogenesis; LPS O-antigen biosynthesis. Inhibited by Cu(2+), while other divalent cations such as Ca(2+), Co(2+), Fe(2+) and Mg(2+) have no obvious effects on enzyme activity. In terms of biological role, catalyzes the conversion of dTDP-alpha-D-fucopyranose to dTDP-alpha-D-fucofuranose. This is a step in the biosynthesis of D-fucofuranose, a component of E.coli O52 O antigen. In Escherichia coli, this protein is dTDP-fucopyranose mutase (fcf2).